Here is an 871-residue protein sequence, read N- to C-terminus: Alanine--tRNA ligase (871 aa).

Zn(2+) contacts are provided by His-561, His-565, Cys-665, and His-669.

Belongs to the class-II aminoacyl-tRNA synthetase family. Requires Zn(2+) as cofactor.

Its subcellular location is the cytoplasm. It catalyses the reaction tRNA(Ala) + L-alanine + ATP = L-alanyl-tRNA(Ala) + AMP + diphosphate. In terms of biological role, catalyzes the attachment of alanine to tRNA(Ala) in a two-step reaction: alanine is first activated by ATP to form Ala-AMP and then transferred to the acceptor end of tRNA(Ala). Also edits incorrectly charged Ser-tRNA(Ala) and Gly-tRNA(Ala) via its editing domain. In Dehalococcoides mccartyi (strain ATCC BAA-2100 / JCM 16839 / KCTC 5957 / BAV1), this protein is Alanine--tRNA ligase.